We begin with the raw amino-acid sequence, 357 residues long: Chorismate synthase (357 aa).

Arginine 48 serves as a coordination point for NADP(+). Residues 125-127 (RSS), 238-239 (NA), glycine 282, 297-301 (KPTSS), and arginine 323 each bind FMN.

This sequence belongs to the chorismate synthase family. In terms of assembly, homotetramer. The cofactor is FMNH2.

It carries out the reaction 5-O-(1-carboxyvinyl)-3-phosphoshikimate = chorismate + phosphate. The protein operates within metabolic intermediate biosynthesis; chorismate biosynthesis; chorismate from D-erythrose 4-phosphate and phosphoenolpyruvate: step 7/7. In terms of biological role, catalyzes the anti-1,4-elimination of the C-3 phosphate and the C-6 proR hydrogen from 5-enolpyruvylshikimate-3-phosphate (EPSP) to yield chorismate, which is the branch point compound that serves as the starting substrate for the three terminal pathways of aromatic amino acid biosynthesis. This reaction introduces a second double bond into the aromatic ring system. This Gluconacetobacter diazotrophicus (strain ATCC 49037 / DSM 5601 / CCUG 37298 / CIP 103539 / LMG 7603 / PAl5) protein is Chorismate synthase.